Reading from the N-terminus, the 245-residue chain is Biosynthetic peptidoglycan transglycosylase (245 aa).

A helical transmembrane segment spans residues 13-35 (VGLARWIVYAGSVFAGAWLATQL).

It belongs to the glycosyltransferase 51 family.

It localises to the cell inner membrane. The enzyme catalyses [GlcNAc-(1-&gt;4)-Mur2Ac(oyl-L-Ala-gamma-D-Glu-L-Lys-D-Ala-D-Ala)](n)-di-trans,octa-cis-undecaprenyl diphosphate + beta-D-GlcNAc-(1-&gt;4)-Mur2Ac(oyl-L-Ala-gamma-D-Glu-L-Lys-D-Ala-D-Ala)-di-trans,octa-cis-undecaprenyl diphosphate = [GlcNAc-(1-&gt;4)-Mur2Ac(oyl-L-Ala-gamma-D-Glu-L-Lys-D-Ala-D-Ala)](n+1)-di-trans,octa-cis-undecaprenyl diphosphate + di-trans,octa-cis-undecaprenyl diphosphate + H(+). It functions in the pathway cell wall biogenesis; peptidoglycan biosynthesis. Its function is as follows. Peptidoglycan polymerase that catalyzes glycan chain elongation from lipid-linked precursors. In Burkholderia vietnamiensis (strain G4 / LMG 22486) (Burkholderia cepacia (strain R1808)), this protein is Biosynthetic peptidoglycan transglycosylase.